The following is a 443-amino-acid chain: Putative type II methyltransferase M.BsuMIIP (443 aa).

The SAM-dependent MTase C5-type domain occupies 4–440 (LRVMSLFSGI…QELIHTYVNK (437 aa)). The active site involves C78.

It belongs to the class I-like SAM-binding methyltransferase superfamily. C5-methyltransferase family.

The enzyme catalyses a 2'-deoxycytidine in DNA + S-adenosyl-L-methionine = a 5-methyl-2'-deoxycytidine in DNA + S-adenosyl-L-homocysteine + H(+). Its function is as follows. A putative methylase, recognizes the double-stranded sequence 5'-GGCC-3', methylates C-?. There is no known cognate restriction enzyme. The chain is Putative type II methyltransferase M.BsuMIIP (mtbP) from Bacillus subtilis (strain 168).